Consider the following 189-residue polypeptide: 3-isopropylmalate dehydratase small subunit (189 aa).

The protein belongs to the LeuD family. LeuD type 1 subfamily. As to quaternary structure, heterodimer of LeuC and LeuD.

It carries out the reaction (2R,3S)-3-isopropylmalate = (2S)-2-isopropylmalate. It participates in amino-acid biosynthesis; L-leucine biosynthesis; L-leucine from 3-methyl-2-oxobutanoate: step 2/4. Functionally, catalyzes the isomerization between 2-isopropylmalate and 3-isopropylmalate, via the formation of 2-isopropylmaleate. This is 3-isopropylmalate dehydratase small subunit from Francisella tularensis subsp. holarctica (strain FTNF002-00 / FTA).